Reading from the N-terminus, the 186-residue chain is Ribosome-recycling factor (186 aa).

Belongs to the RRF family.

The protein resides in the cytoplasm. Functionally, responsible for the release of ribosomes from messenger RNA at the termination of protein biosynthesis. May increase the efficiency of translation by recycling ribosomes from one round of translation to another. This chain is Ribosome-recycling factor, found in Amoebophilus asiaticus (strain 5a2).